Here is a 662-residue protein sequence, read N- to C-terminus: p-hydroxybenzoic acid efflux pump subunit AaeB (662 aa).

Transmembrane regions (helical) follow at residues 22–42, 52–72, 76–96, 102–122, 129–149, 161–181, 378–398, 415–435, 439–459, 465–485, and 491–511; these read FAFKLSFAIVLSLFLGFHLQL, AAIVAAGPAFAAGGEPFSGAI, GMLRIIGTFIGCIGALVIIIA, VVMLMLCCIWAGLCTWVSSLV, IFGLAGYTALIIIVSTQGTPL, EIVLGIVCAILADLLFSPRSI, LFWLSTGWTSGSVCMVMIAVV, FLFGTIYALPLGALMFMFIMP, QSMLLLCLSLGGMAFFLGLEV, GSLGALASTINILVLDNPMTF, and LDSAIGQIIGCFLALMVIMLI.

This sequence belongs to the aromatic acid exporter ArAE (TC 2.A.85) family.

It is found in the cell inner membrane. Functionally, forms an efflux pump with AaeA. Could function as a metabolic relief valve, allowing to eliminate certain compounds when they accumulate to high levels in the cell. The chain is p-hydroxybenzoic acid efflux pump subunit AaeB from Pectobacterium atrosepticum (strain SCRI 1043 / ATCC BAA-672) (Erwinia carotovora subsp. atroseptica).